Consider the following 358-residue polypeptide: Probable tartrate dehydrogenase/decarboxylase TtuC' (358 aa).

Mn(2+)-binding residues include aspartate 222, aspartate 246, and aspartate 250.

Belongs to the isocitrate and isopropylmalate dehydrogenases family. Mg(2+) serves as cofactor. The cofactor is Mn(2+). Requires K(+) as cofactor.

The protein localises to the cytoplasm. It carries out the reaction tartrate + NAD(+) = 2-hydroxy-3-oxosuccinate + NADH + H(+). The catalysed reaction is (2R,3S)-tartrate + NAD(+) = 2-hydroxy-3-oxosuccinate + NADH + H(+). The enzyme catalyses (2R,3R)-tartrate + NAD(+) = 2-hydroxy-3-oxosuccinate + NADH + H(+). It catalyses the reaction (2R,3R)-tartrate + H(+) = (R)-glycerate + CO2. It carries out the reaction (R)-malate + NAD(+) = pyruvate + CO2 + NADH. It participates in carbohydrate acid metabolism; tartrate degradation; 2-hydroxy-3-oxosuccinate from L-tartrate: step 1/1. The protein operates within carbohydrate acid metabolism; tartrate degradation; 2-hydroxy-3-oxosuccinate from meso-tartrate: step 1/1. Its pathway is carbohydrate acid metabolism; tartrate degradation; D-glycerate from L-tartrate: step 1/1. Its function is as follows. Has multiple catalytic activities. Apart from catalyzing the oxidation of (+)-tartrate to oxaloglycolate, also converts meso-tartrate to D-glycerate and catalyzes the oxidative decarboxylation of D-malate to pyruvate. The chain is Probable tartrate dehydrogenase/decarboxylase TtuC' (ttuC') from Agrobacterium vitis (Rhizobium vitis).